The sequence spans 291 residues: Lactoylglutathione lyase (291 aa).

VOC domains are found at residues 24–149 (RLLH…LIQR) and 155–283 (PLCQ…LVDN). Residues Arg31, Asn82, and His96 each coordinate substrate. His96 is an active-site residue. The active-site Proton donor/acceptor is the Glu145. Ni(2+) is bound at residue Glu145. Active-site residues include Gln158 and Glu209. Position 209 (Glu209) interacts with Ni(2+).

This sequence belongs to the glyoxalase I family. In terms of assembly, monomer. Ni(2+) serves as cofactor. In terms of processing, phosphorylated after gibberellin treatment. In terms of tissue distribution, expressed in callus, stem, leaves, panicles and maturing seeds (at protein level).

The catalysed reaction is (R)-S-lactoylglutathione = methylglyoxal + glutathione. It functions in the pathway secondary metabolite metabolism; methylglyoxal degradation; (R)-lactate from methylglyoxal: step 1/2. In terms of biological role, catalyzes the conversion of hemimercaptal, formed from methylglyoxal and glutathione, to S-lactoylglutathione. Involved in the detoxifiation of methylglyoxal. Can functionally complement growth defect of a yeast mutant lacking GLY I. Involved in abiotic stress response. Over-expression of GLYI-11 in tobacco increases tolerance to osmotic, oxidative and salt stresses. The sequence is that of Lactoylglutathione lyase from Oryza sativa subsp. japonica (Rice).